Here is a 448-residue protein sequence, read N- to C-terminus: UDP-glycosyltransferase 79B5 (448 aa).

UDP-alpha-D-glucose is bound by residues Thr261, 320-322 (LEQ), 337-345 (HCGFGSMWE), and 359-362 (LADQ).

This sequence belongs to the UDP-glycosyltransferase family.

This Arabidopsis thaliana (Mouse-ear cress) protein is UDP-glycosyltransferase 79B5 (UGT79B5).